Consider the following 275-residue polypeptide: Ribosomal RNA small subunit methyltransferase A (275 aa).

S-adenosyl-L-methionine contacts are provided by Asn-19, Leu-21, Gly-46, Glu-71, Asp-94, and Asn-117.

It belongs to the class I-like SAM-binding methyltransferase superfamily. rRNA adenine N(6)-methyltransferase family. RsmA subfamily.

The protein resides in the cytoplasm. The catalysed reaction is adenosine(1518)/adenosine(1519) in 16S rRNA + 4 S-adenosyl-L-methionine = N(6)-dimethyladenosine(1518)/N(6)-dimethyladenosine(1519) in 16S rRNA + 4 S-adenosyl-L-homocysteine + 4 H(+). Its function is as follows. Specifically dimethylates two adjacent adenosines (A1518 and A1519) in the loop of a conserved hairpin near the 3'-end of 16S rRNA in the 30S particle. May play a critical role in biogenesis of 30S subunits. The sequence is that of Ribosomal RNA small subunit methyltransferase A from Burkholderia thailandensis (strain ATCC 700388 / DSM 13276 / CCUG 48851 / CIP 106301 / E264).